A 251-amino-acid polypeptide reads, in one-letter code: Transcriptional regulator CBF1 (251 aa).

Residues 1 to 169 are disordered; it reads MVKSHKRTLE…VERKRRESIN (169 aa). Positions 7–28 are enriched in basic and acidic residues; it reads RTLEKDEEHQEKKKANKISKDD. The span at 40–56 shows a compositional bias: low complexity; that stretch reads ASDSAHTDTATAAVAAV. Residues 67–76 are compositionally biased toward polar residues; the sequence is TESSTNQTSA. Over residues 77-105 the composition is skewed to basic and acidic residues; sequence LDKDDKETKDNLNPREETQSSHQEIDIPK. Residues 107–116 are compositionally biased toward polar residues; the sequence is QLTNQQNLAD. The segment covering 117-126 has biased composition (low complexity); the sequence is QHQQYQYHQQ. A compositionally biased stretch (polar residues) spans 127 to 140; sequence LAQTNFKTEPTNSA. Basic and acidic residues predominate over residues 144-167; the sequence is HGSEEWHRQRRENHKEVERKRRES. One can recognise a bHLH domain in the interval 152-200; the sequence is QRRENHKEVERKRRESINTGIRELARLIPTTDTNKAQILQRAVEYIKRL. Positions 190 to 223 form a coiled coil; the sequence is LQRAVEYIKRLKENENNNIEKWTLEKLLTEQAVS.

It localises to the nucleus. Functionally, transcription factor that binds ribosomal protein gene promoters and rDNA locus with TBF1. Necessary for the expression of genes involved in assimilation of inorganic sulfate. Also required for the expression of respiratory genes and glycolytic genes. Does not bind to centromeres and is not necessary for efficient chromosome segregationas as does S.cerevisiae CBF1. This Candida albicans (strain SC5314 / ATCC MYA-2876) (Yeast) protein is Transcriptional regulator CBF1 (CBF1).